A 191-amino-acid chain; its full sequence is Orotate phosphoribosyltransferase (191 aa).

A 5-phospho-alpha-D-ribose 1-diphosphate-binding site is contributed by 114-122 (EDVVTTGKS). Orotate contacts are provided by threonine 118 and arginine 146.

Belongs to the purine/pyrimidine phosphoribosyltransferase family. PyrE subfamily. In terms of assembly, homodimer. The cofactor is Mg(2+).

It carries out the reaction orotidine 5'-phosphate + diphosphate = orotate + 5-phospho-alpha-D-ribose 1-diphosphate. It functions in the pathway pyrimidine metabolism; UMP biosynthesis via de novo pathway; UMP from orotate: step 1/2. Functionally, catalyzes the transfer of a ribosyl phosphate group from 5-phosphoribose 1-diphosphate to orotate, leading to the formation of orotidine monophosphate (OMP). This is Orotate phosphoribosyltransferase from Clostridium botulinum (strain Loch Maree / Type A3).